A 503-amino-acid chain; its full sequence is GMP synthase [glutamine-hydrolyzing] (503 aa).

Positions 1 to 189 (MVLVLDFGSQ…FLELAGAKRD (189 aa)) constitute a Glutamine amidotransferase type-1 domain. Cys78 acts as the Nucleophile in catalysis. Active-site residues include His164 and Glu166. One can recognise a GMPS ATP-PPase domain in the interval 190–378 (WTPEHVLEEL…LGLPDTLRLR (189 aa)). Residue 217–223 (SGGVDSS) coordinates ATP.

In terms of assembly, homodimer.

The catalysed reaction is XMP + L-glutamine + ATP + H2O = GMP + L-glutamate + AMP + diphosphate + 2 H(+). It functions in the pathway purine metabolism; GMP biosynthesis; GMP from XMP (L-Gln route): step 1/1. Catalyzes the synthesis of GMP from XMP. The polypeptide is GMP synthase [glutamine-hydrolyzing] (Thermus thermophilus (strain ATCC BAA-163 / DSM 7039 / HB27)).